The chain runs to 82 residues: Metallothionein (82 aa).

10 residues coordinate Cd(2+): Cys6, Cys8, Cys11, Cys13, Cys29, Cys33, His37, Cys43, Cys48, and Cys50. Residues Cys6, Cys8, and Cys11 each contribute to the Zn(2+) site. Zn(2+)-binding residues include Cys29, Cys33, His37, Cys43, Cys48, and Cys50. The tract at residues 61–82 (ITNNQLDEALEETFPASDPISP) is disordered.

This sequence belongs to the metallothionein superfamily.

Its function is as follows. Metallothioneins are small proteins that have a high content of cysteine residues which allow them to bind heavy metal ions through clusters of thiolate bonds. Preferentially, binds four Cd(2+) ions. Also binds three Zn(2+) ions but with less affinity. Required for long-term viability. May play a role in the storage or sequestration of metals when present in excess. This Pseudomonas fluorescens (strain Q2-87) protein is Metallothionein.